A 203-amino-acid chain; its full sequence is ATP-dependent Clp protease proteolytic subunit (203 aa).

The active-site Nucleophile is the serine 107. Histidine 132 is an active-site residue.

It belongs to the peptidase S14 family. As to quaternary structure, fourteen ClpP subunits assemble into 2 heptameric rings which stack back to back to give a disk-like structure with a central cavity, resembling the structure of eukaryotic proteasomes.

It localises to the cytoplasm. It carries out the reaction Hydrolysis of proteins to small peptides in the presence of ATP and magnesium. alpha-casein is the usual test substrate. In the absence of ATP, only oligopeptides shorter than five residues are hydrolyzed (such as succinyl-Leu-Tyr-|-NHMec, and Leu-Tyr-Leu-|-Tyr-Trp, in which cleavage of the -Tyr-|-Leu- and -Tyr-|-Trp bonds also occurs).. In terms of biological role, cleaves peptides in various proteins in a process that requires ATP hydrolysis. Has a chymotrypsin-like activity. Plays a major role in the degradation of misfolded proteins. This Thermotoga maritima (strain ATCC 43589 / DSM 3109 / JCM 10099 / NBRC 100826 / MSB8) protein is ATP-dependent Clp protease proteolytic subunit.